Consider the following 382-residue polypeptide: S-adenosylmethionine synthase (382 aa).

An ATP-binding site is contributed by His-14. Residue Asp-16 participates in Mg(2+) binding. Residue Glu-42 coordinates K(+). Glu-55 and Gln-91 together coordinate L-methionine. The interval 91–101 (QSENIAMGVNL) is flexible loop. ATP contacts are provided by residues 156 to 158 (DMK), 222 to 223 (KF), Asp-231, 237 to 238 (RK), Ala-254, and Lys-258. Asp-231 lines the L-methionine pocket. Lys-262 provides a ligand contact to L-methionine.

Belongs to the AdoMet synthase family. As to quaternary structure, homotetramer; dimer of dimers. Requires Mg(2+) as cofactor. It depends on K(+) as a cofactor.

Its subcellular location is the cytoplasm. It catalyses the reaction L-methionine + ATP + H2O = S-adenosyl-L-methionine + phosphate + diphosphate. It functions in the pathway amino-acid biosynthesis; S-adenosyl-L-methionine biosynthesis; S-adenosyl-L-methionine from L-methionine: step 1/1. In terms of biological role, catalyzes the formation of S-adenosylmethionine (AdoMet) from methionine and ATP. The overall synthetic reaction is composed of two sequential steps, AdoMet formation and the subsequent tripolyphosphate hydrolysis which occurs prior to release of AdoMet from the enzyme. This is S-adenosylmethionine synthase from Mycoplasmopsis synoviae (strain 53) (Mycoplasma synoviae).